Consider the following 289-residue polypeptide: 4-diphosphocytidyl-2-C-methyl-D-erythritol kinase (289 aa).

The active site involves Lys11. 96–106 contacts ATP; the sequence is PVAAGIGGGSS. Asp138 is an active-site residue.

This sequence belongs to the GHMP kinase family. IspE subfamily.

It catalyses the reaction 4-CDP-2-C-methyl-D-erythritol + ATP = 4-CDP-2-C-methyl-D-erythritol 2-phosphate + ADP + H(+). The protein operates within isoprenoid biosynthesis; isopentenyl diphosphate biosynthesis via DXP pathway; isopentenyl diphosphate from 1-deoxy-D-xylulose 5-phosphate: step 3/6. Its function is as follows. Catalyzes the phosphorylation of the position 2 hydroxy group of 4-diphosphocytidyl-2C-methyl-D-erythritol. In Azorhizobium caulinodans (strain ATCC 43989 / DSM 5975 / JCM 20966 / LMG 6465 / NBRC 14845 / NCIMB 13405 / ORS 571), this protein is 4-diphosphocytidyl-2-C-methyl-D-erythritol kinase.